We begin with the raw amino-acid sequence, 372 residues long: 3-dehydroquinate synthase (372 aa).

Residues 116 to 120 (GVVGD), 140 to 141 (TT), K153, K162, and 180 to 183 (TLKT) contribute to the NAD(+) site. Residues E195, H260, and H277 each coordinate Zn(2+).

This sequence belongs to the sugar phosphate cyclases superfamily. Dehydroquinate synthase family. NAD(+) is required as a cofactor. Co(2+) serves as cofactor. The cofactor is Zn(2+).

It is found in the cytoplasm. The enzyme catalyses 7-phospho-2-dehydro-3-deoxy-D-arabino-heptonate = 3-dehydroquinate + phosphate. Its pathway is metabolic intermediate biosynthesis; chorismate biosynthesis; chorismate from D-erythrose 4-phosphate and phosphoenolpyruvate: step 2/7. Its function is as follows. Catalyzes the conversion of 3-deoxy-D-arabino-heptulosonate 7-phosphate (DAHP) to dehydroquinate (DHQ). This is 3-dehydroquinate synthase from Prochlorococcus marinus (strain MIT 9313).